The chain runs to 23 residues: Aurein-4.3 (23 aa).

It belongs to the frog skin active peptide (FSAP) family. Aurein subfamily. As to expression, expressed by the skin dorsal glands.

It is found in the secreted. Functionally, has no antimicrobial or anticancer activity. This is Aurein-4.3 from Ranoidea aurea (Green and golden bell frog).